The following is a 391-amino-acid chain: Squalene synthase 8 (391 aa).

Belongs to the phytoene/squalene synthase family. It depends on Mg(2+) as a cofactor. Requires Mn(2+) as cofactor.

The protein resides in the endoplasmic reticulum. It carries out the reaction 2 (2E,6E)-farnesyl diphosphate + NADH + H(+) = squalene + 2 diphosphate + NAD(+). It catalyses the reaction 2 (2E,6E)-farnesyl diphosphate + NADPH + H(+) = squalene + 2 diphosphate + NADP(+). The protein operates within terpene metabolism; lanosterol biosynthesis; lanosterol from farnesyl diphosphate: step 1/3. Component of the triterpene saponins (e.g. ginsenosides or panaxosides) and phytosterols biosynthetic pathways. Catalyzes the biosynthesis of squalene. The sequence is that of Squalene synthase 8 from Panax ginseng (Korean ginseng).